Reading from the N-terminus, the 270-residue chain is Diaminopimelate epimerase (270 aa).

Positions 15, 49, and 66 each coordinate substrate. The active-site Proton donor is the Cys75. Residues 76–77 (GN), Asn155, Asn187, and 204–205 (ER) each bind substrate. Cys213 functions as the Proton acceptor in the catalytic mechanism. 214–215 (GS) provides a ligand contact to substrate.

Belongs to the diaminopimelate epimerase family. In terms of assembly, homodimer.

The protein localises to the cytoplasm. The catalysed reaction is (2S,6S)-2,6-diaminopimelate = meso-2,6-diaminopimelate. Its pathway is amino-acid biosynthesis; L-lysine biosynthesis via DAP pathway; DL-2,6-diaminopimelate from LL-2,6-diaminopimelate: step 1/1. Its function is as follows. Catalyzes the stereoinversion of LL-2,6-diaminopimelate (L,L-DAP) to meso-diaminopimelate (meso-DAP), a precursor of L-lysine and an essential component of the bacterial peptidoglycan. In Rickettsia massiliae (strain Mtu5), this protein is Diaminopimelate epimerase.